The following is a 189-amino-acid chain: Calcyphosin (189 aa).

EF-hand domains follow at residues 21-56, 57-92, 93-128, and 136-172; these read LGIQGLARFFRRLDRDRSRSLDSRELQRGLAELGLV, LDTAEAEGVCRRWDRDGSGTLDLEEFLRALRPPMSQ, AREAVIAAAFAKLDRSGDGVVTVDDLRGVYSGRTHP, and TEEEVLRRFLDNFDSSEKDGQVTLAEFQDYYSGVSAS. Ca(2+) is bound by residues aspartate 34, aspartate 36, serine 38, serine 40, glutamate 45, aspartate 70, aspartate 72, serine 74, threonine 76, glutamate 81, aspartate 106, serine 108, aspartate 110, and aspartate 117. Position 40 is a phosphoserine; by PKA (serine 40).

In terms of assembly, monomer. Does not form oligomers in the presence of calcium. Phosphorylated in response to thyrotropin and cAMP. As to expression, detected in thyroid, salivary gland, lung, brain and cerebellum (at protein level).

The protein resides in the cytoplasm. Functionally, calcium-binding protein. May play a role in cellular signaling events (Potential). The protein is Calcyphosin (CAPS) of Canis lupus familiaris (Dog).